Here is a 247-residue protein sequence, read N- to C-terminus: 7-cyano-7-deazaguanine synthase (247 aa).

Position 21-31 (21-31 (FSGGQDSTACL)) interacts with ATP. Residues C209, C224, C227, and C230 each coordinate Zn(2+).

The protein belongs to the QueC family. Zn(2+) is required as a cofactor.

The catalysed reaction is 7-carboxy-7-deazaguanine + NH4(+) + ATP = 7-cyano-7-deazaguanine + ADP + phosphate + H2O + H(+). It functions in the pathway purine metabolism; 7-cyano-7-deazaguanine biosynthesis. In terms of biological role, catalyzes the ATP-dependent conversion of 7-carboxy-7-deazaguanine (CDG) to 7-cyano-7-deazaguanine (preQ(0)). The sequence is that of 7-cyano-7-deazaguanine synthase from Halorhodospira halophila (strain DSM 244 / SL1) (Ectothiorhodospira halophila (strain DSM 244 / SL1)).